Consider the following 230-residue polypeptide: Orotidine 5'-phosphate decarboxylase (230 aa).

Substrate is bound by residues D10, K32, 59-68 (DLKLHDIPNT), T118, R179, Q188, G208, and R209. K61 (proton donor) is an active-site residue.

This sequence belongs to the OMP decarboxylase family. Type 1 subfamily. Homodimer.

It catalyses the reaction orotidine 5'-phosphate + H(+) = UMP + CO2. The protein operates within pyrimidine metabolism; UMP biosynthesis via de novo pathway; UMP from orotate: step 2/2. Catalyzes the decarboxylation of orotidine 5'-monophosphate (OMP) to uridine 5'-monophosphate (UMP). The sequence is that of Orotidine 5'-phosphate decarboxylase from Opitutus terrae (strain DSM 11246 / JCM 15787 / PB90-1).